A 465-amino-acid polypeptide reads, in one-letter code: Neuraminidase (465 aa).

Over 1–11 the chain is Intravirion; that stretch reads MLPSTIQTLTL. A helical membrane pass occupies residues 12 to 34; it reads FLTSGGVLLSLYVSASLSYLLYS. The interval 13 to 35 is involved in apical transport and lipid raft association; sequence LTSGGVLLSLYVSASLSYLLYSD. Over 35–465 the chain is Virion surface; that stretch reads DILLRFSSKI…DTVTGVDMAL (431 aa). Residues 38 to 85 are hypervariable stalk region; that stretch reads LRFSSKITAPTMTLDCANASNVQAVNRSATKEMTFLLPEPEWTYPRLS. N-linked (GlcNAc...) asparagine; by host glycans are attached at residues N55 and N63. Intrachain disulfides connect C86-C419, C121-C126, C181-C228, C230-C235, C276-C290, C278-C288, C317-C336, and C423-C446. Positions 88–465 are head of neuraminidase; the sequence is GSTFQKALLI…DTVTGVDMAL (378 aa). R115 contributes to the substrate binding site. N143 is a glycosylation site (N-linked (GlcNAc...) asparagine; by host). D148 functions as the Proton donor/acceptor in the catalytic mechanism. Residue R149 participates in substrate binding. A substrate-binding site is contributed by 274–275; that stretch reads EE. N283 carries an N-linked (GlcNAc...) asparagine; by host glycan. Residue R291 coordinates substrate. Ca(2+)-binding residues include D292 and D323. Positions 328–347 are disordered; it reads DDGSITGPCESDGDKGRGGI. R373 is a substrate binding site. Y408 (nucleophile) is an active-site residue.

It belongs to the glycosyl hydrolase 34 family. In terms of assembly, homotetramer. The cofactor is Ca(2+). In terms of processing, N-glycosylated.

The protein localises to the virion membrane. It localises to the host apical cell membrane. It catalyses the reaction Hydrolysis of alpha-(2-&gt;3)-, alpha-(2-&gt;6)-, alpha-(2-&gt;8)- glycosidic linkages of terminal sialic acid residues in oligosaccharides, glycoproteins, glycolipids, colominic acid and synthetic substrates.. Its activity is regulated as follows. Inhibited by the neuraminidase inhibitors zanamivir (Relenza) and oseltamivir (Tamiflu). These drugs interfere with the release of progeny virus from infected cells and are effective against all influenza strains. Resistance to neuraminidase inhibitors is quite rare. Its function is as follows. Catalyzes the removal of terminal sialic acid residues from viral and cellular glycoconjugates. Cleaves off the terminal sialic acids on the glycosylated HA during virus budding to facilitate virus release. Additionally helps virus spread through the circulation by further removing sialic acids from the cell surface. These cleavages prevent self-aggregation and ensure the efficient spread of the progeny virus from cell to cell. Otherwise, infection would be limited to one round of replication. Described as a receptor-destroying enzyme because it cleaves a terminal sialic acid from the cellular receptors. May facilitate viral invasion of the upper airways by cleaving the sialic acid moieties on the mucin of the airway epithelial cells. Likely to plays a role in the budding process through its association with lipid rafts during intracellular transport. May additionally display a raft-association independent effect on budding. Plays a role in the determination of host range restriction on replication and virulence. Sialidase activity in late endosome/lysosome traffic seems to enhance virus replication. This chain is Neuraminidase, found in Influenza B virus (strain B/Memphis/3/1989).